Here is a 284-residue protein sequence, read N- to C-terminus: Prestalk D11 protein (284 aa).

Residues 1–25 form the signal peptide; it reads MLNKLILLLILSSCLVLSVKSEVNV. An A-1 repeat occupies 25–64; the sequence is VDCSLVRCAQPICKPHYRLNMTDSCCGRCEPCTDVACTLQ. A B-1 repeat occupies 65 to 82; that stretch reads VKYCQDGEVPTGCCPCTL. The stretch at 88 to 126 is one A-2 repeat; it reads DCSLVKCARPVCKPYYRLNMTDSCCGRCEPCTGVACTLQ. The B-2 repeat unit spans residues 127–144; that stretch reads IKYCKDGEVPTGCCPCTP. The stretch at 145-159 is one C-1 repeat; sequence QPTKKPDCSKVPCPK. The stretch at 161-178 is one B-3 repeat; it reads LKYCQEGELPTGCCPCTP. A C-2 repeat occupies 179 to 193; it reads QPTKKPDCSRVPCPK. Residues 195–212 form a B-4 repeat; the sequence is LKYCKEGELPTGCCPCTP. One copy of the C-3 repeat lies at 213-228; the sequence is QPTKKPDCSDVMCTMD. One copy of the B-5 repeat lies at 229–246; the sequence is IRYCKNGELPTGCCPCTP. Residues 247–262 form a C-4 repeat; the sequence is QETKVPDCSKAMCTMD. A B-6 repeat occupies 263–278; sequence IKYCKPGEKPFGCCPC.

This chain is Prestalk D11 protein (ampA), found in Dictyostelium discoideum (Social amoeba).